A 479-amino-acid chain; its full sequence is Cyclic AMP-responsive element-binding protein 3-like protein 3 (479 aa).

Topologically, residues 1–317 (MDGDIAAGKM…QSTSKPAHAG (317 aa)) are cytoplasmic. Residues 67 to 144 (CILGPGDSDP…CPEPPRTQVQ (78 aa)) form a disordered region. Residues 98-110 (PQDTPPRSGTEPA) show a composition bias toward polar residues. Residues 239–302 (VLKKIRRKIR…LSLLEQLKHL (64 aa)) form the bZIP domain. Residues 241–270 (KKIRRKIRNKQSAQESRKKKKEYIDGLENR) are basic motif. A leucine-zipper region spans residues 281 to 302 (LQRKVLHLEKQNLSLLEQLKHL). Residue K290 forms a Glycyl lysine isopeptide (Lys-Gly) (interchain with G-Cter in ubiquitin) linkage. The chain crosses the membrane as a helical; Signal-anchor for type II membrane protein span at residues 318–338 (TCIAVLLLSFALIILPSISPF). The Lumenal portion of the chain corresponds to 339–479 (NSNKVDSPGD…RLVQDALGVL (141 aa)). N411, N418, and N425 each carry an N-linked (GlcNAc...) asparagine glycan.

The protein belongs to the bZIP family. ATF subfamily. Binds DNA as a dimer. May form homodimers. Interacts with ATF6. Interacts with SYNV1/HRD1; this interaction leads to CREB3L3 ubiquitination and proteasomal degradation. In terms of processing, following ER stress a fragment containing the cytoplasmic transcription factor domain is released by proteolysis. The cleavage seems to be performed sequentially by site-1 and site-2 proteases. Post-translationally, N-glycosylation is required for optimal proteolytic activation. Ubiquitinated at Lys-290 by SYNV1/HRD1 via 'Lys-27'-linked ubiquitin. As to expression, expressed in adult liver (at protein level) and small intestine.

The protein resides in the endoplasmic reticulum membrane. The protein localises to the nucleus. Its function is as follows. Transcription factor that may act during endoplasmic reticulum (ER) stress by activating unfolded protein response target genes. Activated in response to cAMP stimulation. Binds to the cAMP response element (CRE). Activates transcription through box-B element. Activates transcription through CRE. May function synergistically with ATF6. In acute inflammatory response, may activate expression of acute phase response (APR) genes. May be involved in growth suppression. Regulates FGF21 transcription. Plays a crucial role in the regulation of triglyceride metabolism and is required for the maintenance of normal plasma triglyceride concentrations. This chain is Cyclic AMP-responsive element-binding protein 3-like protein 3 (Creb3l3), found in Mus musculus (Mouse).